Here is an 813-residue protein sequence, read N- to C-terminus: Fibroblast growth factor receptor 2 (813 aa).

An N-terminal signal peptide occupies residues 1 to 14 (MLLLALLAFLLVSR). At 18-367 (RPSYSMVDDT…EDNPVPYYME (350 aa)) the chain is on the extracellular side. An Ig-like C2-type 1 domain is found at 21–117 (YSMVDDTTPE…NSHFFHVNVT (97 aa)). The cysteines at positions 58 and 103 are disulfide-linked. N-linked (GlcNAc...) asparagine glycans are attached at residues N79 and N115. The interval 119–143 (ASSSGDDEDDNDGSEDFTNDNNNIR) is disordered. Over residues 123–136 (GDDEDDNDGSEDFT) the composition is skewed to acidic residues. 2 Ig-like C2-type domains span residues 145 to 237 (PYWT…YHLD) and 246 to 348 (PILQ…AWLT). Residues 152–169 (KMEKKLHAVSAANTVKLR) are heparin-binding. C170 and C221 are disulfide-bonded. 5 N-linked (GlcNAc...) asparagine glycosylation sites follow: N231, N255, N287, N308, and N321. The cysteines at positions 268 and 332 are disulfide-linked. A helical transmembrane segment spans residues 368 to 388 (IGIYSTGIFIIFCMVVVCVVC). At 389-813 (RMRQGAKKKK…FQHVNGVVKT (425 aa)) the chain is on the cytoplasmic side. Y456 is subject to Phosphotyrosine; by autocatalysis. A Protein kinase domain is found at 471–760 (LTLGKPLGEG…LTLTTNEEYL (290 aa)). ATP contacts are provided by residues 477-485 (LGEGCFGQV), K507, 555-557 (EYA), and N561. At Y576 the chain carries Phosphotyrosine; by autocatalysis. D616 serves as the catalytic Proton acceptor. Y646, Y647, and Y759 each carry phosphotyrosine; by autocatalysis. Low complexity predominate over residues 771–792 (PSFPDSSCSASSSSGDDSVFSP). The tract at residues 771 to 801 (PSFPDSSCSASSSSGDDSVFSPDPMPHDPCL) is disordered.

It belongs to the protein kinase superfamily. Tyr protein kinase family. Fibroblast growth factor receptor subfamily. Monomer. Homodimer after ligand binding. In terms of processing, autophosphorylated. Binding of FGF family members together with heparan sulfate proteoglycan or heparin promotes receptor dimerization and autophosphorylation on tyrosine residues. Autophosphorylation occurs in trans between the two FGFR molecules present in the dimer. N-glycosylated in the endoplasmic reticulum. The N-glycan chains undergo further maturation to an Endo H-resistant form in the Golgi apparatus. Post-translationally, ubiquitinated. FGFR2 is rapidly ubiquitinated after autophosphorylation, leading to internalization and degradation. Subject to degradation both in lysosomes and by the proteasome. Expressed in the anterior neural plate in early neurula stage embryos. Later in development, the protein is also expressed in the eye anlagen, midbrain-hindbrain boundary and otic vesicle.

It is found in the cell membrane. It localises to the golgi apparatus. Its subcellular location is the cytoplasmic vesicle. The enzyme catalyses L-tyrosyl-[protein] + ATP = O-phospho-L-tyrosyl-[protein] + ADP + H(+). Present in an inactive conformation in the absence of bound ligand. Ligand binding leads to dimerization and activation by autophosphorylation on tyrosine residues. Tyrosine-protein kinase that acts as a cell-surface receptor for fibroblast growth factors and plays an essential role in the regulation of cell proliferation, differentiation, migration and apoptosis, and in the regulation of embryonic development. Required for normal embryonic patterning, limb bud development, lung morphogenesis, osteogenesis and skin development. Plays an essential role in the regulation of osteoblast differentiation, proliferation and apoptosis, and is required for normal skeleton development. Promotes cell proliferation in keratinocytes and immature osteoblasts, but promotes apoptosis in differentiated osteoblasts. Phosphorylates PLCG1, FRS2 and PAK4. Ligand binding leads to the activation of several signaling cascades. Activation of PLCG1 leads to the production of the cellular signaling molecules diacylglycerol and inositol 1,4,5-trisphosphate. Phosphorylation of FRS2 triggers recruitment of GRB2, GAB1, PIK3R1 and SOS1, and mediates activation of RAS, MAPK1/ERK2, MAPK3/ERK1 and the MAP kinase signaling pathway, as well as of the AKT1 signaling pathway. FGFR2 signaling is down-regulated by ubiquitination, internalization and degradation. Mutations that lead to constitutive kinase activation or impair normal FGFR2 maturation, internalization and degradation lead to aberrant signaling. Over-expressed FGFR2 promotes activation of STAT1. The chain is Fibroblast growth factor receptor 2 (fgfr2) from Xenopus laevis (African clawed frog).